The sequence spans 393 residues: G protein-activated inward rectifier potassium channel 3 (393 aa).

A disordered region spans residues 1–23 (MAQENAAFSPGQEEPPRRRGRQR). Over 1 to 57 (MAQENAAFSPGQEEPPRRRGRQRYVEKDGRCNVQQGNVRETYRYLTDLFTTLVDLQW) the chain is Cytoplasmic. The chain crosses the membrane as a helical span at residues 58 to 82 (RLSLLFFVLAYALTWLFFGAIWWLI). Residues 83–106 (AYGRGDLEHLEDTAWTPCVNNLNG) lie on the Extracellular side of the membrane. Residues 107-118 (FVAAFLFSIETE) constitute an intramembrane region (helical; Pore-forming). An intramembrane region (pore-forming) is located at residues 119–125 (TTIGYGH). Residues 120-125 (TIGYGH) carry the Selectivity filter motif. Residues 126 to 134 (RVITDQCPE) lie on the Extracellular side of the membrane. Residues 135–156 (GIVLLLLQAILGSMVNAFMVGC) form a helical membrane-spanning segment. At 157 to 393 (MFVKISQPNK…LPPPESESKV (237 aa)) the chain is on the cytoplasmic side. The interval 360–393 (KVEEEGAGEGAGGEAGADKEQNGCLPPPESESKV) is disordered. Residues 384-393 (LPPPESESKV) show a composition bias toward pro residues. Residues 390-393 (ESKV) carry the PDZ-binding motif.

This sequence belongs to the inward rectifier-type potassium channel (TC 1.A.2.1) family. KCNJ9 subfamily. In terms of assembly, associates with KCNJ3/GIRK1 to form a G-protein-activated heteromultimer pore-forming unit. Interacts (via PDZ-binding motif) with SNX27 (via PDZ domain); the interaction is required when endocytosed to prevent degradation in lysosomes and promote recycling to the plasma membrane.

The protein resides in the membrane. It carries out the reaction K(+)(in) = K(+)(out). Inward rectifier potassium channels are characterized by a greater tendency to allow potassium to flow into the cell rather than out of it. Their voltage dependence is regulated by the concentration of extracellular potassium; as external potassium is raised, the voltage range of the channel opening shifts to more positive voltages. The inward rectification is mainly due to the blockage of outward current by internal magnesium, This receptor is controlled by G proteins. Unable to produce channel activity when expressed alone. Forms a functional channel in association with KCNJ3/GIRK1. The protein is G protein-activated inward rectifier potassium channel 3 (KCNJ9) of Homo sapiens (Human).